Reading from the N-terminus, the 243-residue chain is Segregation and condensation protein A (243 aa).

The protein belongs to the ScpA family. As to quaternary structure, component of a cohesin-like complex composed of ScpA, ScpB and the Smc homodimer, in which ScpA and ScpB bind to the head domain of Smc. The presence of the three proteins is required for the association of the complex with DNA.

Its subcellular location is the cytoplasm. Functionally, participates in chromosomal partition during cell division. May act via the formation of a condensin-like complex containing Smc and ScpB that pull DNA away from mid-cell into both cell halves. The sequence is that of Segregation and condensation protein A from Staphylococcus epidermidis (strain ATCC 35984 / DSM 28319 / BCRC 17069 / CCUG 31568 / BM 3577 / RP62A).